Consider the following 731-residue polypeptide: Alpha-xylosidase (731 aa).

Catalysis depends on residues Asp353 and Glu356. Asp428 serves as the catalytic Proton donor.

Belongs to the glycosyl hydrolase 31 family. In terms of assembly, monomer.

It catalyses the reaction Hydrolysis of terminal, non-reducing alpha-D-xylose residues with release of alpha-D-xylose.. Functionally, catalyzes the liberation of alpha-xylose from the non-reducing terminal glucose of xyloglucan oligosaccharides. Has high hydrolytic activity on the disaccharide isoprimeverose. Follows a retaining mechanism of substrate hydrolysis. The chain is Alpha-xylosidase (xylS) from Saccharolobus solfataricus (strain ATCC 35092 / DSM 1617 / JCM 11322 / P2) (Sulfolobus solfataricus).